We begin with the raw amino-acid sequence, 57 residues long: Peptide BmKa1 (57 aa).

The N-terminal stretch at 1–22 (MKPRVFFLLFLLVAAMIETGES) is a signal peptide. Composition is skewed to acidic residues over residues 20-29 (GESEENEEGS) and 45-57 (VDNE…GDSD). Residues 20 to 57 (GESEENEEGSNESGKSTEAKNTDASVDNEDSDIDGDSD) are disordered.

The protein belongs to the non-disulfide-bridged peptide (NDBP) superfamily. In terms of tissue distribution, expressed by the venom gland.

The protein localises to the secreted. The protein is Peptide BmKa1 of Olivierus martensii (Manchurian scorpion).